Reading from the N-terminus, the 443-residue chain is tRNA-2-methylthio-N(6)-dimethylallyladenosine synthase (443 aa).

The MTTase N-terminal domain maps to 1–114; sequence MRFYIKTFGC…VTEAVKRALQ (114 aa). 6 residues coordinate [4Fe-4S] cluster: cysteine 10, cysteine 46, cysteine 79, cysteine 150, cysteine 154, and cysteine 157. The 232-residue stretch at 136 to 367 folds into the Radical SAM core domain; sequence RSSKHHAWVT…MNLQKRINRK (232 aa). The 62-residue stretch at 370 to 431 folds into the TRAM domain; it reads ERYKGKTVRV…AGPLYGKVVW (62 aa).

Belongs to the methylthiotransferase family. MiaB subfamily. In terms of assembly, monomer. [4Fe-4S] cluster serves as cofactor.

It is found in the cytoplasm. The enzyme catalyses N(6)-dimethylallyladenosine(37) in tRNA + (sulfur carrier)-SH + AH2 + 2 S-adenosyl-L-methionine = 2-methylsulfanyl-N(6)-dimethylallyladenosine(37) in tRNA + (sulfur carrier)-H + 5'-deoxyadenosine + L-methionine + A + S-adenosyl-L-homocysteine + 2 H(+). In terms of biological role, catalyzes the methylthiolation of N6-(dimethylallyl)adenosine (i(6)A), leading to the formation of 2-methylthio-N6-(dimethylallyl)adenosine (ms(2)i(6)A) at position 37 in tRNAs that read codons beginning with uridine. This Thermotoga sp. (strain RQ2) protein is tRNA-2-methylthio-N(6)-dimethylallyladenosine synthase.